The chain runs to 572 residues: MRGPGTAASHSPLGLCALVLALLGALPTDTRAQPYHGEKGISVPDHGFCQPISIPLCTDIAYNQTILPNLLGHTNQEDAGLEVHQFYPLVKVQCSPELRFFLCSMYAPVCTVLDQAIPPCRSLCERARQGCEALMNKFGFQWPERLRCENFPVHGAGEICVGQNTSDGSGGAGGSPTAYPTAPYLPDPPFTAMSPSDGRGRLSFPFSCPRQLKVPPYLGYRFLGERDCGAPCEPGRANGLMYFKEEERRFARLWVGVWSVLCCASTLFTVLTYLVDMRRFSYPERPIIFLSGCYFMVAVAHVAGFLLEDRAVCVERFSDDGYRTVAQGTKKEGCTILFMVLYFFGMASSIWWVILSLTWFLAAGMKWGHEAIEANSQYFHLAAWAVPAVKTITILAMGQVDGDLLSGVCYVGLSSVDALRGFVLAPLFVYLFIGTSFLLAGFVSLFRIRTIMKHDGTKTEKLEKLMVRIGVFSVLYTVPATIVLACYFYEQAFREHWERTWLLQTCKSYAVPCPPGHFSPMSPDFTVFMIKYLMTMIVGITTGFWIWSGKTLQSWRRFYHRLSHSSKGETAV.

An N-terminal signal peptide occupies residues 1-32 (MRGPGTAASHSPLGLCALVLALLGALPTDTRA). Over 33 to 254 (QPYHGEKGIS…EEERRFARLW (222 aa)) the chain is Extracellular. In terms of domain architecture, FZ spans 44 to 163 (PDHGFCQPIS…HGAGEICVGQ (120 aa)). Cystine bridges form between C49–C110, C57–C103, C94–C131, C120–C160, and C124–C148. N-linked (GlcNAc...) asparagine glycosylation is present at N63. The N-linked (GlcNAc...) asparagine glycan is linked to N164. Residues 255–275 (VGVWSVLCCASTLFTVLTYLV) form a helical membrane-spanning segment. The Cytoplasmic portion of the chain corresponds to 276 to 286 (DMRRFSYPERP). The helical transmembrane segment at 287-307 (IIFLSGCYFMVAVAHVAGFLL) threads the bilayer. Residues 308–334 (EDRAVCVERFSDDGYRTVAQGTKKEGC) are Extracellular-facing. Residues 335–355 (TILFMVLYFFGMASSIWWVIL) form a helical membrane-spanning segment. Residues 356 to 377 (SLTWFLAAGMKWGHEAIEANSQ) are Cytoplasmic-facing. Residues 378-398 (YFHLAAWAVPAVKTITILAMG) form a helical membrane-spanning segment. Over 399-421 (QVDGDLLSGVCYVGLSSVDALRG) the chain is Extracellular. Residues 422 to 442 (FVLAPLFVYLFIGTSFLLAGF) form a helical membrane-spanning segment. The Cytoplasmic segment spans residues 443-468 (VSLFRIRTIMKHDGTKTEKLEKLMVR). The chain crosses the membrane as a helical span at residues 469–489 (IGVFSVLYTVPATIVLACYFY). Residues 490–526 (EQAFREHWERTWLLQTCKSYAVPCPPGHFSPMSPDFT) lie on the Extracellular side of the membrane. The helical transmembrane segment at 527-547 (VFMIKYLMTMIVGITTGFWIW) threads the bilayer. Topologically, residues 548 to 572 (SGKTLQSWRRFYHRLSHSSKGETAV) are cytoplasmic. The Lys-Thr-X-X-X-Trp motif, mediates interaction with the PDZ domain of Dvl family members signature appears at 550–555 (KTLQSW). The short motif at 570 to 572 (TAV) is the PDZ-binding element.

This sequence belongs to the G-protein coupled receptor Fz/Smo family. Interacts with MAGI3. Interacts with DVL1. Interacts with CCDC88C/DAPLE; the interaction displaces DVL1 from FZD7, leading to inhibition of canonical Wnt signaling and triggering of non-canonical Wnt responses. Interacts with MYOC. Binds to SDCBP; this interaction is increased by inositol trisphosphate (IP3). Interacts with glypican GPC3. Ubiquitinated by ZNRF3, leading to its degradation by the proteasome.

The protein localises to the cell membrane. It is found in the endosome membrane. In terms of biological role, receptor for Wnt proteins. Most frizzled receptors are coupled to the beta-catenin canonical signaling pathway, which leads to the activation of disheveled proteins, inhibition of GSK-3 kinase, nuclear accumulation of beta-catenin and activation of Wnt target genes. A second signaling pathway involving PKC and calcium fluxes has been seen for some family members, but it is not yet clear if it represents a distinct pathway or if it can be integrated in the canonical pathway, as PKC seems to be required for Wnt-mediated inactivation of GSK-3 kinase. Both pathways seem to involve interactions with G-proteins. Activation by WNT8 induces expression of beta-catenin target genes. Following ligand activation, binds to CCDC88C/DAPLE which displaces DVL1 from FZD7 and leads to inhibition of canonical Wnt signaling, activation of G-proteins by CCDC88C and triggering of non-canonical Wnt responses. May be involved in transduction and intercellular transmission of polarity information during tissue morphogenesis and/or in differentiated tissues. The protein is Frizzled-7 (Fzd7) of Mus musculus (Mouse).